The chain runs to 401 residues: Deacetoxyvindoline 4-hydroxylase (401 aa).

The Fe2OG dioxygenase domain occupies 242–345 (CAEGLILLGH…SVAVAFGIKT (104 aa)). 3 residues coordinate Fe cation: His268, Asp270, and His324. Residue Arg334 coordinates 2-oxoglutarate.

This sequence belongs to the iron/ascorbate-dependent oxidoreductase family. In terms of assembly, monomer. The cofactor is Fe cation. It depends on L-ascorbate as a cofactor. In terms of tissue distribution, highest levels in leaves, lower levels in stems and fruits. Not expressed in flowers and roots.

Its subcellular location is the cytoplasm. The protein localises to the nucleus. The enzyme catalyses deacetoxyvindoline + 2-oxoglutarate + O2 = 4-O-deacetylvindoline + succinate + CO2. It functions in the pathway alkaloid biosynthesis; vindoline biosynthesis. Functionally, catalyzes the C4-hydroxylation of desacetoxyvindoline. The polypeptide is Deacetoxyvindoline 4-hydroxylase (Catharanthus roseus (Madagascar periwinkle)).